Consider the following 249-residue polypeptide: Small ribosomal subunit protein uS2 (249 aa).

Belongs to the universal ribosomal protein uS2 family.

The protein is Small ribosomal subunit protein uS2 of Listeria innocua serovar 6a (strain ATCC BAA-680 / CLIP 11262).